The primary structure comprises 250 residues: Flavin-dependent thymidylate synthase (250 aa).

The ThyX domain maps to leucine 7–glutamate 233. Residues glutamate 92 to arginine 95, glutamine 103 to arginine 107, and arginine 172 each bind dUMP. Residues arginine 95–arginine 97 and glutamine 103 each bind FAD. A ThyX motif motif is present at residues arginine 95–serine 105. FAD-binding positions include asparagine 188–arginine 190 and histidine 194. Arginine 199 lines the dUMP pocket. Arginine 199 acts as the Involved in ionization of N3 of dUMP, leading to its activation in catalysis.

The protein belongs to the thymidylate synthase ThyX family. In terms of assembly, homotetramer. FAD is required as a cofactor.

The catalysed reaction is dUMP + (6R)-5,10-methylene-5,6,7,8-tetrahydrofolate + NADPH + H(+) = dTMP + (6S)-5,6,7,8-tetrahydrofolate + NADP(+). Its pathway is pyrimidine metabolism; dTTP biosynthesis. In terms of biological role, catalyzes the reductive methylation of 2'-deoxyuridine-5'-monophosphate (dUMP) to 2'-deoxythymidine-5'-monophosphate (dTMP) while utilizing 5,10-methylenetetrahydrofolate (mTHF) as the methyl donor, and NADPH and FADH(2) as the reductant. This Corynebacterium efficiens (strain DSM 44549 / YS-314 / AJ 12310 / JCM 11189 / NBRC 100395) protein is Flavin-dependent thymidylate synthase.